The chain runs to 619 residues: UvrABC system protein C (619 aa).

In terms of domain architecture, GIY-YIG spans 20–98 (TAPGVYRMYA…IKSLSPRYNV (79 aa)). The UVR domain maps to 207 to 242 (DQLGEEIMHSMQQASEALEFERAARLRDLLSSLRSM).

It belongs to the UvrC family. Interacts with UvrB in an incision complex.

It localises to the cytoplasm. Functionally, the UvrABC repair system catalyzes the recognition and processing of DNA lesions. UvrC both incises the 5' and 3' sides of the lesion. The N-terminal half is responsible for the 3' incision and the C-terminal half is responsible for the 5' incision. This Xanthomonas euvesicatoria pv. vesicatoria (strain 85-10) (Xanthomonas campestris pv. vesicatoria) protein is UvrABC system protein C.